The sequence spans 661 residues: MNNFSIISEYKPAGDQPKAIDEIIAGLSSKKRSQMLLGITGSGKTFTMANIIERTNRPTLIMAHNKTLAAQIYSEMKSLFPKNAVEYFVSYYDYYQPEAYIARTDTFIEKDSSINEQIDLMRHAATRSLLERRDVIVVSSVSCIYGLGSPDLYYQMMVNLEPGQSYLRDQLLNDLINLQYERNDIGFERGCFRVKGDNIDIFPSHYSDKAWRLSFFGNELEYIHEFDPLTGEKLAKLDKAMVFGNSHFVMPQETVNNAISGIEEELQKRLEFLKSQDKPLETQRLNQRTQYDLEMLTETGSCKGVENYSRFFTGRHAGEPPPTLFEYLPEDALLFVDESHVSVPQIRAMYNGDRARKKVLVEHGFRLPSALDNRPLKFEEWDKFRPQTVFVSATPGPFELEETGGTVVELIIRPTGLLDPECIIKPATNQVEDLISEIQTTIAQGFRVLVTTLTKKMAEDLTAYLQELKYKTSYLHSNVHTLERIEILRDLRQGTIDVLVGINLLREGLDIPECGLVAILDADKEGFLRSEVSLIQTIGRAARNSAGRVILYADKMTKSIDKAVSETLRRRQIQQEYNEKHGIIPKTINRAIHALAEFEKIDSKLDKKQAHTLFDNPAKLKTHIDKLKKEMLKAASNLEFEQAVKLRDQLKTLEAAALELS.

Residues 25–182 (AGLSSKKRSQ…NDLINLQYER (158 aa)) enclose the Helicase ATP-binding domain. 38–45 (GITGSGKT) lines the ATP pocket. The Beta-hairpin signature appears at 91–114 (YYDYYQPEAYIARTDTFIEKDSSI). Residues 430–592 (QVEDLISEIQ…IIPKTINRAI (163 aa)) form the Helicase C-terminal domain. Positions 621–656 (KTHIDKLKKEMLKAASNLEFEQAVKLRDQLKTLEAA) constitute a UVR domain.

The protein belongs to the UvrB family. In terms of assembly, forms a heterotetramer with UvrA during the search for lesions. Interacts with UvrC in an incision complex.

The protein resides in the cytoplasm. The UvrABC repair system catalyzes the recognition and processing of DNA lesions. A damage recognition complex composed of 2 UvrA and 2 UvrB subunits scans DNA for abnormalities. Upon binding of the UvrA(2)B(2) complex to a putative damaged site, the DNA wraps around one UvrB monomer. DNA wrap is dependent on ATP binding by UvrB and probably causes local melting of the DNA helix, facilitating insertion of UvrB beta-hairpin between the DNA strands. Then UvrB probes one DNA strand for the presence of a lesion. If a lesion is found the UvrA subunits dissociate and the UvrB-DNA preincision complex is formed. This complex is subsequently bound by UvrC and the second UvrB is released. If no lesion is found, the DNA wraps around the other UvrB subunit that will check the other stand for damage. This is UvrABC system protein B from Rickettsia peacockii (strain Rustic).